The following is a 285-amino-acid chain: MKMAIPNKGRLKDPVVQFLASVGVKGNFSDDRALIIPTNWEGVQLVMVRTEDIPSIVESGAAELGITGHDYVIESNSDVDELIRLDFGKSKIVLAVPVSWNIDRVEEIKDEIRIATKYYNIAKQYLEKKNIKAKIVKISGAAEVMPSLGAADAIIDVMSTGTTLKLHGLKPLDTILESSAVVIANRNWVKSEEADKINLLLTMMKGALMARNKKMIFMNVPDDKLDKVIASLPAMLSPTLSKLAKSDAWEVITVVDEDLIPEVIAKVKANGARDIVVVNIEKVVK.

This sequence belongs to the ATP phosphoribosyltransferase family. Long subfamily. The cofactor is Mg(2+).

Its subcellular location is the cytoplasm. The enzyme catalyses 1-(5-phospho-beta-D-ribosyl)-ATP + diphosphate = 5-phospho-alpha-D-ribose 1-diphosphate + ATP. Its pathway is amino-acid biosynthesis; L-histidine biosynthesis; L-histidine from 5-phospho-alpha-D-ribose 1-diphosphate: step 1/9. With respect to regulation, feedback inhibited by histidine. Its function is as follows. Catalyzes the condensation of ATP and 5-phosphoribose 1-diphosphate to form N'-(5'-phosphoribosyl)-ATP (PR-ATP). Has a crucial role in the pathway because the rate of histidine biosynthesis seems to be controlled primarily by regulation of HisG enzymatic activity. This Sulfurisphaera tokodaii (strain DSM 16993 / JCM 10545 / NBRC 100140 / 7) (Sulfolobus tokodaii) protein is ATP phosphoribosyltransferase.